The chain runs to 634 residues: Chaperone protein HtpG (634 aa).

Residues 1-342 (MTVETDKQTL…SSDLSLNVSR (342 aa)) are a; substrate-binding. Positions 343–559 (EILQSGPVVD…QGDLGLQMRQ (217 aa)) are b. The tract at residues 560–634 (LLEASGQAVP…LNKLLLELSV (75 aa)) is c.

The protein belongs to the heat shock protein 90 family. As to quaternary structure, homodimer.

The protein localises to the cytoplasm. In terms of biological role, molecular chaperone. Has ATPase activity. The protein is Chaperone protein HtpG of Xanthomonas euvesicatoria pv. vesicatoria (strain 85-10) (Xanthomonas campestris pv. vesicatoria).